A 2531-amino-acid polypeptide reads, in one-letter code: MASLALRINIVDQNNVKTMQFEPSMIVYDACKMIRERIGEKPAAGQGYGLFLANEDPKRGVWLESGRTLDFYLLKPGDLLEYKNKMRPLRVRMMDESLKTVLVDDSFTVDQLVKTVCDRIGITNNEEFSLVCEDEEATPKKAAPPQIRNQKKMDELKKKLHTEDDVNWLSHDKTLRSQGISESQVLLLRKKFFFSDQNVDRNDPVQLNQLYAQARDAIVDGTHPCTYEEAINLAALQCQIVLGNHDSGKHKPGYITEELGSYLPREYVKAKGVERRVFTEHAKFTGLSQLNAKFRYIQVVRSLKTYGVTFFLVKEKMKGKNKLAPRLLGITRESIMRVDEKTKEVMKTWPLTTVRRWAASPNSFTLDFGDYSESYYSVQTTEGEQISRLIAGYIDIILKKKRATDRKVPEVEDETTLTEDLVLPARATQVSYVTSTSDRGEEGQVAHPGVLRAAGESGALFVPGDFLEGSHIQRQAAQTPGYSPAQQALQSSIAKGLGCADVAINELEAPTQLPPLGSDPQSLKWKQNTLDVSRQNVGSQLAAMTAAAAQMVGLTGADPADIDYTAVGAAVTTLSSNLTELSKGVRMIAALQGNSHDGEKLLEAARGLAGAVRHLLKSAEPSENQNRKDLLDAAAALGISGTQLMALMGDPDVTQEVQDALLSKAKAVAVATSGLVQNAKMVAGKCPDSTLQSSVITATKGTATATSQLVACTKIVASTITNPLCQEQLINSAKQVAGAVEGTVSSAQNACSDDDALRELGMSATKVTDALQDLLRYIRDIEAGGLRGGKYEEQIEMILAATERLINSLGNAQETVKSAKTVAMATSQMVSGVKDEASGLSDEDAKRRLLAAARGLADATAKMVDAAKVSARDPSNVEAQAALKAATEDLRAAVNAAANNALKKKLIKKLEVAAKHTAAAATQCIAAAQGAGPTNRNQSSQQQLLGNCKTVADHIGRLVQAVRASMANPESPSSQLGLINASQAMIQPCGKMIAASKAAVPTIGDQAAALQLANFAKQTATCLAELRTAAGKAAEACGSLEIESAIDVVRQLEADLLSVQRTAASGKFLPLPGETAESCALELGATSKTVGASMAQLLTAAAQGNENYTGIAARDTANALKVLSGSVRGVAAATDDRSAQEQIIVTAIQVMAHSRRLIEEAKKAIASPTNPENQSRLAQAAKAVSQALNQVINCLPGQRDVDAAIKDIAAASVALTTGQFPSAGGQSFQDVQTSLSVSSAALNVSASELVANSRGTHMQLAQSSQKFAGKYKTMLHSGLMLAGLSKEKAARSKIVGYLRSVSMSSSKLLLAAKALSADPNAPNVKNNLAAAARGVTDAINALVTVCTASAPGQKECDNALRKIQTVGGMLANPVEPVNDNSYFVCLDAVMENSKILGEAMGDITKHAKGERHDEFGSAVSTAASAVCTLTESAAQAAYLVAISDSSSTAAISGLVDTSQFARAQQAIREACEQLLNPSSAQQQVLSSATVIAKHTSGLCNACKIASGKTKNPVAKRKFVQSAKDVATSTANLVKSIKALAGTLNDGNRGDCAKTTKPLLEAIDDLVEFASAAEFASVPAQISPEARSAQAPILVAGNNMLIASSSLISSAKNLAVNPRDAATWQLLASHSKAVSDAIRRLVAAVKDKSPGQAECDQAIELLNMAINEVDQATLAAISSKLTPSSQSTLQGFHTQMMGGVSEISDLIEPVALAAKGDAEKLGHMVTNVVSYFVPLSKAAVGAASKTTNPDRQMAVLEQTKTLAESALQLMYAAKESGGNPAAAAAGAHANINEAAGNMTEAVKDLKGTLEMAASEAGLTAGMVDTIHKAAGTLDDPIHGEVSKSFGEYQESMVHSAKIIILKAQDMVGRAGTSPGELGVISKDATTSYCALATDCRGALATADDDVTGARLKAACQQLGDALGDLIQCAGSVQSNPTDAIGRKELSDCAKKVGSKVNFVLAALQAGAKGTQACINAVADVSGIVGDLDTSVMFATAGVLNPDREGDTFGEHREDILKTAKTLVEDTKTLVSGAAASQEQLAKAAVDAVGTITRLADHVKKGAAALTSEDQEAQVLLLNAVRDVASSLGALITATKNASGKSVQDPAMEHLRTCAKAMVSNVSSLLKTVKSVEDEAARGARALESAIDAINAQLEELLSPNEPGRDASPEDIIRVTKGVTLATAKAVAAGNSGRQDDVTASANLGRKAIIDMMLTTKAAALKAESEDSKIRSITAAKECTAAFRSLLELVHSILMKPSHDKKQKLTAYSKEVATCVSEVVQAAEVLKGTDWVDPSDPNIIAENELLNAAASIEAAAKKLALLKPREKKHEADETLSFDEQILEAARAIAAATGALIKSATTAQRELVAQGRLRPGVPGSDDSQWAEGLVSAARMVAAATQSLCEAANSAVQGVSSEEKLIASAKAVAASTAQLLLACQVKADADSENFKRLHKAGGAVKRAAENLVTAAKRSSEEGDDEEVSGGGQERFVGGIAREIEAQEAILRKERELDEAKRQLKKIRHDKYKRHGQDEP.

One can recognise an FERM domain in the interval 87–401 (RPLRVRMMDE…GYIDIILKKK (315 aa)). An interaction with VIN1 region spans residues 598 to 621 (GEKLLEAARGLAGAVRHLLKSAEP). In terms of domain architecture, I/LWEQ spans 2287-2526 (TDWVDPSDPN…KIRHDKYKRH (240 aa)). Residues 2466–2485 (AAKRSSEEGDDEEVSGGGQE) form a disordered region.

In terms of assembly, interacts with VIN1 (vinculin); the interaction facilitates VIN1 binding to F-actin.

It localises to the cytoplasm. Its subcellular location is the cytoskeleton. The protein localises to the cell cortex. In terms of biological role, probably involved in connections of major cytoskeletal structures to the plasma membrane. This Oscarella pearsei (Sponge) protein is Talin.